The chain runs to 1413 residues: DNA-directed RNA polymerase subunit beta' (1413 aa).

The Zn(2+) site is built by C70, C72, C85, and C88. The Mg(2+) site is built by D460, D462, and D464. The Zn(2+) site is built by C819, C893, C900, and C903.

The protein belongs to the RNA polymerase beta' chain family. In terms of assembly, the RNAP catalytic core consists of 2 alpha, 1 beta, 1 beta' and 1 omega subunit. When a sigma factor is associated with the core the holoenzyme is formed, which can initiate transcription. Mg(2+) serves as cofactor. It depends on Zn(2+) as a cofactor.

The enzyme catalyses RNA(n) + a ribonucleoside 5'-triphosphate = RNA(n+1) + diphosphate. In terms of biological role, DNA-dependent RNA polymerase catalyzes the transcription of DNA into RNA using the four ribonucleoside triphosphates as substrates. This chain is DNA-directed RNA polymerase subunit beta', found in Burkholderia ambifaria (strain MC40-6).